The sequence spans 314 residues: Serine protease 46 (314 aa).

The Peptidase S1 domain maps to 44 to 281 (VVNGKVVEVG…FTQWIKRQIG (238 aa)). A disulfide bond links cysteine 69 and cysteine 85. Active-site charge relay system residues include histidine 84 and aspartate 130. Disulfide bonds link cysteine 164-cysteine 239, cysteine 197-cysteine 219, and cysteine 229-cysteine 257. Catalysis depends on serine 233, which acts as the Charge relay system. A helical membrane pass occupies residues 293-313 (FLSPFILTGYILLVSLGSLWL).

The protein belongs to the peptidase S1 family.

Its subcellular location is the membrane. This is Serine protease 46 (Prss46) from Rattus norvegicus (Rat).